Reading from the N-terminus, the 1167-residue chain is Integrin alpha-E (1167 aa).

The N-terminal stretch at 1 to 19 (MKWLFHTLLCMASLKPQGA) is a signal peptide. At 20 to 1114 (FNLDVDWAWV…IFLKEEETRS (1095 aa)) the chain is on the extracellular side. 2 FG-GAP repeats span residues 27-81 (AWVT…PDEI) and 84-142 (QPVE…LQAQ). Asn51 is a glycosylation site (N-linked (GlcNAc...) asparagine). Cystine bridges form between Cys72/Cys83 and Cys130/Cys164. Residues 149–192 (EGFLDPGAHVDSGDYCRSKGGSTGEEKKSARRRRTVEEEDEEED) are X-domain (extra domain). The segment at 163 to 191 (YCRSKGGSTGEEKKSARRRRTVEEEDEEE) is disordered. The region spanning 193–382 (GTEIAIVLDG…SKLQQHIVHM (190 aa)) is the VWFA domain. N-linked (GlcNAc...) asparagine glycosylation is found at Asn256, Asn314, Asn341, Asn364, Asn418, and Asn437. Residues 383–435 (EGTVGDALQYQLAQTGFSAQILDKGQVLLGTVGAFNWSGGALLYSTQNGRGCF) form an FG-GAP 3 repeat. FG-GAP repeat units lie at residues 438–491 (QTAK…REED), 492–552 (AFVR…DASF), 555–619 (AHTL…GLYD), and 623–683 (QQIR…FTPD). 12 residues coordinate Ca(2+): Asp514, Asp516, Asp518, Asp522, Asp578, Asn580, Asp582, Asp586, Asp646, Asn648, Asp650, and Asp654. A disulfide bridge connects residues Cys698 and Cys754. N-linked (GlcNAc...) asparagine glycosylation is found at Asn718 and Asn773. Residues Cys814 and Cys820 are joined by a disulfide bond. N-linked (GlcNAc...) asparagine glycans are attached at residues Asn829 and Asn846. Residues Cys884 and Cys898 are joined by a disulfide bond. 4 N-linked (GlcNAc...) asparagine glycosylation sites follow: Asn911, Asn925, Asn968, and Asn1013. Intrachain disulfides connect Cys998/Cys1023 and Cys1031/Cys1047. N-linked (GlcNAc...) asparagine glycosylation is found at Asn1055 and Asn1086. The helical transmembrane segment at 1115 to 1137 (LPLIIGSSIGGLLVLVVIIAILF) threads the bilayer. The Cytoplasmic segment spans residues 1138 to 1167 (KCGFFKRKYQQLNLESTRRAQLKADSLLQD). The GFFKR motif motif lies at 1140 to 1144 (GFFKR).

This sequence belongs to the integrin alpha chain family. Heterodimer of an alpha and a beta subunit. The alpha subunit is composed of a heavy and a light chains linked by a disulfide bond. Alpha-E associates with beta-7.

It localises to the membrane. Integrin alpha-E/beta-7 is a receptor for E-cadherin. It mediates adhesion of intra-epithelial T-lymphocytes to epithelial cell monolayers. Mice expressing a null mutation of the alpha-E subunit gene exhibit a marked reduction in the numbers of intraepithelial lymphocytes in the gut and in the development of gut-associated lymphoid aggregates, supporting a specific role for this integrin in mediating retention of lymphocytes in the intestinal wall. The chain is Integrin alpha-E (Itgae) from Mus musculus (Mouse).